The following is a 585-amino-acid chain: Glutamate decarboxylase (585 aa).

Residues 35–56 (KSAVQSGHQGSNNMRDTSSQGM) show a composition bias toward polar residues. Residues 35–60 (KSAVQSGHQGSNNMRDTSSQGMANKY) are disordered. Lys318 carries the N6-(pyridoxal phosphate)lysine modification.

It belongs to the group II decarboxylase family. It depends on pyridoxal 5'-phosphate as a cofactor.

It carries out the reaction L-glutamate + H(+) = 4-aminobutanoate + CO2. The protein is Glutamate decarboxylase (GAD1) of Saccharomyces cerevisiae (strain ATCC 204508 / S288c) (Baker's yeast).